A 245-amino-acid polypeptide reads, in one-letter code: 3-deoxy-manno-octulosonate cytidylyltransferase (245 aa).

This sequence belongs to the KdsB family.

The protein resides in the cytoplasm. It carries out the reaction 3-deoxy-alpha-D-manno-oct-2-ulosonate + CTP = CMP-3-deoxy-beta-D-manno-octulosonate + diphosphate. The protein operates within nucleotide-sugar biosynthesis; CMP-3-deoxy-D-manno-octulosonate biosynthesis; CMP-3-deoxy-D-manno-octulosonate from 3-deoxy-D-manno-octulosonate and CTP: step 1/1. Its pathway is bacterial outer membrane biogenesis; lipopolysaccharide biosynthesis. Its function is as follows. Activates KDO (a required 8-carbon sugar) for incorporation into bacterial lipopolysaccharide in Gram-negative bacteria. This chain is 3-deoxy-manno-octulosonate cytidylyltransferase, found in Rhodopseudomonas palustris (strain BisB5).